We begin with the raw amino-acid sequence, 510 residues long: MSEEKKSVELSGDIDFIETPPAKASQFETGEDCGIEVTKAAAIPNPPLAVDGPGNESFSNYLLGGTLVGLPAFLTWFFGGGAKTFVFFFLLSVLPVLVAFWTYASTFSPRTNEKVKLPGRPVEHYITFKREEDKAKWHGKNKIPMQTFAEMYLDGLVDFNGDTLDVMEYRHDWANFSFTWDLFKFIVGTFFVDVLFHTKAQDEEQVRPNYDSGNDHYAWFLGPRMIYTSGIISDPEKEETLEEMQDNKMAIVCEKIGLKEGETMLDIGCGWGTLARFASLNYGAKVTGLTIAENQTAWGNDALRKAGIPEEQSKILCMDYRDAPRTKFDKITQLEMGEHVGIRRLTGFFRQCYDMLKDDGAMYVQLSGLRQAWQYEDFIWGLYLNKYIFRGADASTPLWYYVKCLEQAGFEVKGIDTVGVHYSGTLWRWYRNWVGNVEAIKAKYGPRWYRIWELFLAWSVIASRQGSATCYQMVVVKNLNSTHRINGVASQFGLAGALAASRAAGKSRLP.

N-linked (GlcNAc...) asparagine glycosylation is present at Asn55. Transmembrane regions (helical) follow at residues Leu62–Ala82 and Thr84–Ala104. Residue Asn175 is glycosylated (N-linked (GlcNAc...) asparagine). S-adenosyl-L-methionine is bound by residues Tyr227–Thr228, Met264–Gly272, Thr290–Gln295, and Tyr320–Arg321. A glycan (N-linked (GlcNAc...) asparagine) is linked at Asn294.

This sequence belongs to the CFA/CMAS family.

Its subcellular location is the membrane. It catalyses the reaction a (4E,8E)-4-sphinga-4,8-dienine ceramide + S-adenosyl-L-methionine = a 9-methyl-(4E,8E)-sphinga-4,8-dienine ceramide + S-adenosyl-L-homocysteine + H(+). It functions in the pathway lipid metabolism; sphingolipid metabolism. In terms of biological role, catalyzes methylation of the sphingoid base component of glucosylceramides (GluCers) at the C9-position. Sphingolipid C9-methylation requires 4,8-desaturated ceramides as substrates. Glucosylceramides play important roles in growth, differentiation and pathogenicity. The methyl group at the C9-position distinguishes fungal glucosylceramides from those of plants and animals and may thus play a role in host-pathogen interactions enabling the host to recognize the fungal attack and initiate specific defense responses. The polypeptide is Sphingolipid C9-methyltransferase B (Emericella nidulans (strain FGSC A4 / ATCC 38163 / CBS 112.46 / NRRL 194 / M139) (Aspergillus nidulans)).